The primary structure comprises 246 residues: Small ribosomal subunit protein uS2 (246 aa).

This sequence belongs to the universal ribosomal protein uS2 family.

The protein is Small ribosomal subunit protein uS2 of Dictyoglomus turgidum (strain DSM 6724 / Z-1310).